The primary structure comprises 297 residues: Protease HtpX homolog (297 aa).

The next 2 helical transmembrane spans lie at 14–34 and 38–58; these read IVLL…VGYL and SLET…IIMV. Residue histidine 144 participates in Zn(2+) binding. Residue glutamate 145 is part of the active site. Zn(2+) is bound at residue histidine 148. 2 helical membrane-spanning segments follow: residues 159–179 and 199–219; these read IALA…NWWF and ILLL…AAAI. Zn(2+) is bound at residue glutamate 228.

It belongs to the peptidase M48B family. Zn(2+) serves as cofactor.

It is found in the cell membrane. The sequence is that of Protease HtpX homolog from Leuconostoc mesenteroides subsp. mesenteroides (strain ATCC 8293 / DSM 20343 / BCRC 11652 / CCM 1803 / JCM 6124 / NCDO 523 / NBRC 100496 / NCIMB 8023 / NCTC 12954 / NRRL B-1118 / 37Y).